We begin with the raw amino-acid sequence, 1136 residues long: Unconventional myosin-Ib (1136 aa).

A Myosin motor domain is found at 15 to 701; that stretch reads IGVGDMVLLE…TLFKLEDLRK (687 aa). Ser60 carries the phosphoserine modification. An ATP-binding site is contributed by 108–115; that stretch reads GESGAGKT. Lys287 is covalently cross-linked (Glycyl lysine isopeptide (Lys-Gly) (interchain with G-Cter in SUMO1); alternate). A Glycyl lysine isopeptide (Lys-Gly) (interchain with G-Cter in SUMO2); alternate cross-link involves residue Lys287. Residues 578–600 are actin-binding; it reads VATLMKNLQTKNPNYIRCIKPND. IQ domains follow at residues 704–733, 728–748, 750–779, 779–808, 808–837, and 837–866; these read LEDL…SQIV, KKSQ…KRYQ, TKSS…QKRC, CKEA…EARN, NKHA…EARR, and RKHA…ANAG. Positions 952 to 1136 constitute a TH1 domain; the sequence is KALYPSSVGQ…NNRLLEVAVP (185 aa).

It belongs to the TRAFAC class myosin-kinesin ATPase superfamily. Myosin family.

Its function is as follows. Motor protein that may participate in process critical to neuronal development and function such as cell migration, neurite outgrowth and vesicular transport. The sequence is that of Unconventional myosin-Ib (MYO1B) from Homo sapiens (Human).